Reading from the N-terminus, the 98-residue chain is Large ribosomal subunit protein eL21 (98 aa).

Residues 1-24 (MVKKAHSFRRKTRGKLSKHPRRRG) are compositionally biased toward basic residues. The disordered stretch occupies residues 1–27 (MVKKAHSFRRKTRGKLSKHPRRRGLPP).

Belongs to the eukaryotic ribosomal protein eL21 family.

The polypeptide is Large ribosomal subunit protein eL21 (Thermococcus gammatolerans (strain DSM 15229 / JCM 11827 / EJ3)).